An 887-amino-acid polypeptide reads, in one-letter code: MPSIGPIPTIPDEGSRGSSATAAPRRAMASYRDTTLGGRAEGVAFSAVEDSYTSSVSLARMLYGGDLEEWVRHTRPGVSLEIQSRAPVRFPPPNNPSSRRVTVVRAPMGSGKTTALLKWLGEALDAPDISALVVSCRRSFTRTLAKRFNDAELPGFATYFTSTDYTMAGEPFRRLLVQIESLHRVDDNLLNNYDILVLDEVMSTIGQLYSPTMVHLNKVDALLTRLLKTCPRVIAMDATANAQLVDFLASARGERSVHVIINSFAAPGFSQRDGTLLRTLGTDVLRAALGFVLVDDENGTKVMETDSRPISARLREVNSAGFFGRLMDRLVAGRNVCVFSSTVSFSEIVARFCSQFTDSILVLNSLRPSEDVAFWGGVRVLIYTTVVTVGLSFDTAHFHSMFAYVKPMSHGPDMVSVYQSLGRVRELIHNELLVYVDSSGARAEPIFTPMLLNHVVSRQGGWPAEFSQVTDALCCQFKARCGPAYRTASTRGLALFVRFKYKHFFERCTLASVGDSINILYTLLESNQMRVAIEGCQFPLTAAGFCDFLQDLRLDAYAARKEIKQLRGPGGIAATPTEVFENDDVAVFIQKYLRPGVAHDEILALLVELNSPIVREQFVNVAVLGACLRLPAALESPEVFAGVYKHYASGVVPVISDAGALESVSITPDVNVLARWDLYKSCTRHARDLAWDPSRGGSGLDMSEDFITNTLSADYNRFQSLLVEIAKCNVTPLEMLAAGAVRGVTTALSGRPKSRVPLSKGEHAVSLFKVLWEDVFGAKLAKSTQTFPGGVRVKNLRKDEIVALLESVNVNHSECKTHRELYALLMCNRKLFAGPRYKLRAPKWSRNLCFLELDNTGTCKTPLDAALADLAPSAWPQVYGAVDFDAL.

Residues 1 to 28 (MPSIGPIPTIPDEGSRGSSATAAPRRAM) form a disordered region. One can recognise a Helicase ATP-binding domain in the interval 93–258 (PNNPSSRRVT…ASARGERSVH (166 aa)). 106–113 (APMGSGKT) is a binding site for ATP.

The protein belongs to the herpesviridae OriBP family. Homodimer. Interacts with the major DNA-binding protein. Interacts with the DNA helicase/primase complex-associated protein and the polymerase accessory protein.

It is found in the host nucleus. Functions as a docking protein to recruit essential components of the viral replication machinery to viral DNA origins. In the presence of the major DNA-binding protein, opens dsDNA leading to a conformational change in the origin that facilitates DNA unwinding and subsequent replication. In Equus caballus (Horse), this protein is Replication origin-binding protein.